A 288-amino-acid chain; its full sequence is CBY1-interacting BAR domain-containing protein 1 (288 aa).

A mitochondrion-targeting transit peptide spans 1–47; it reads MLRRSLENRDAQTRQLQDAVTNVEKHFGELCQIFAAYVRKTARLRDK. Residues 10–220 are BAR-like; sequence DAQTRQLQDA…KIDEEEDLEV (211 aa). A coiled-coil region spans residues 107–176; that stretch reads KMKRDDLKAT…ETIDNFEKQK (70 aa). A disordered region spans residues 266–288; that stretch reads RKDHQTEDDDEEDEDLDVTEEEN. Over residues 271 to 288 the composition is skewed to acidic residues; sequence TEDDDEEDEDLDVTEEEN.

Belongs to the CIBAR family. Homodimer (via BAR-like domain). Heterodimer with FAM92B (via BAR-like domains). Interacts (via BAR-like domain) with CBY1; this interaction is required for targeting FAM92A to centriole and cilium basal body. Interacts (via BAR-like domain) with CBY3; both proteins form a ninefold symmetric structure at the flagellar base; are recruited to the annulus in a mutually dependent manner and regulate annulus positionning.

The protein resides in the cytoplasm. Its subcellular location is the cytoskeleton. It localises to the microtubule organizing center. The protein localises to the centrosome. It is found in the centriole. The protein resides in the cilium basal body. Its subcellular location is the cell projection. It localises to the cilium. The protein localises to the nucleus. It is found in the mitochondrion inner membrane. The protein resides in the flagellum. Plays a critical role in regulating mitochondrial ultrastructure and function by maintaining the integrity of mitochondrial morphology, particularly the organization of cristae. Preferentially binds to negatively charged phospholipids like cardiolipin and phosphatidylinositol 4,5-bisphosphate enhancing its interaction with mitochondrial membranes. Induces membrane curvature and tubulation, which are critical for maintaining mitochondrial ultrastructure and the organization of cristae. Plays a crucial role in ciliogenesis. May play a role in limb development through its role in ciliogenesis. Plays a key role in the correct positioning of the annulus, a septin-based ring structure in the sperm flagellum, serving both as a physical barrier and a membrane diffusion barrier that separates the midpiece (MP) from the principal piece (PP). This positioning is essential for proper sperm motility and function. Interacts with CBY3 to form a complex which localizes to the curved membrane region of the flagellar pocket. By doing so, may provide stability and rigidity to the periannular membrane to prevent membrane deformation. This function is crucial for halting annulus migration at the proximal end of the fibrous sheath-containing PP. In Bos taurus (Bovine), this protein is CBY1-interacting BAR domain-containing protein 1.